The sequence spans 307 residues: Type 2A encapsulin shell protein (307 aa).

The protein belongs to the encapsulin family. Family 2A subfamily. Homooligomeric. The encapsulin nanocompartment is formed by 60 subunits; monomers form pentamers which assemble to form shells. There are 12 charged pores where the pentamers meet as well as 3-fold axis channels and dimer channels.

Its subcellular location is the encapsulin nanocompartment. Shell component of a type 2A encapsulin nanocompartment. Forms encapsulin nanocompartments about 24 nm in diameter from 60 monomers. Probably encapsulates at least cysteine desulfurase (CyD) and allows passage of cysteine into its interior, probably involved in sulfur metabolism. The polypeptide is Type 2A encapsulin shell protein (Mycobacterium avium).